The primary structure comprises 440 residues: Armadillo-like helical domain containing protein 1 (440 aa).

The protein is Armadillo-like helical domain containing protein 1 of Homo sapiens (Human).